Reading from the N-terminus, the 488-residue chain is ATP-dependent RNA helicase dbp3 (488 aa).

Residues 1 to 29 (MAKREHQDQTGDSRPSKKSKGTKDTKKNT) show a composition bias toward basic and acidic residues. The tract at residues 1 to 42 (MAKREHQDQTGDSRPSKKSKGTKDTKKNTEVSPPYFQSPALD) is disordered. The Q motif motif lies at 92 to 100 (GFASPTAIQ). A Helicase ATP-binding domain is found at 104–279 (WPLLFAGRDV…STFMTSPVTV (176 aa)). 117–124 (AETGSGKT) serves as a coordination point for ATP. A DEAD box motif is present at residues 226–229 (DEAD). The Helicase C-terminal domain maps to 306-457 (EKEQRLVQIL…EVPEALLKFG (152 aa)).

The protein belongs to the DEAD box helicase family. DDX5/DBP2 subfamily.

The protein resides in the nucleus. The protein localises to the nucleolus. The catalysed reaction is ATP + H2O = ADP + phosphate + H(+). ATP-dependent RNA helicase required for 60S ribosomal subunit synthesis. Involved in efficient pre-rRNA processing, predominantly at site A3, which is necessary for the normal formation of 25S and 5.8S rRNAs. The sequence is that of ATP-dependent RNA helicase dbp3 (dbp3) from Emericella nidulans (strain FGSC A4 / ATCC 38163 / CBS 112.46 / NRRL 194 / M139) (Aspergillus nidulans).